The chain runs to 241 residues: Co-chaperone protein p23-1 (241 aa).

The CS domain occupies 2–91 (SRHPEVKWAE…AEPERWNKLL (90 aa)). 17 MGG repeats span residues 129–131 (MGG), 132–134 (MGG), 135–137 (MGG), 138–140 (MGG), 141–143 (MGG), 144–146 (MGG), 147–149 (MGG), 150–152 (MGG), 162–164 (MGG), 165–167 (MGG), 168–170 (MGG), 171–173 (MGG), 180–182 (MGG), 183–185 (MGG), 186–188 (MGG), 189–191 (MGG), and 192–194 (MGG). The segment at 129–194 (MGGMGGMGGM…GMGGMGGMGG (66 aa)) is 17 X 3 AA repeats of M-G-G. Residues 188–241 (GMGGMGGMEEFEDSDDEEETAKSGDKKDDAVKEEGLATEKAPAAEETTSVKEDK) are disordered. The segment covering 196-206 (EEFEDSDDEEE) has biased composition (acidic residues). The span at 207-224 (TAKSGDKKDDAVKEEGLA) shows a compositional bias: basic and acidic residues. The span at 225-234 (TEKAPAAEET) shows a compositional bias: low complexity.

Belongs to the p23/wos2 family. In terms of assembly, interacts with HSP90 in an ATP-dependent manner. Interacts with HSP90-5, HSP90-6 and HSP90-7. As to expression, widely expressed but preferentially in the root meristem.

The protein localises to the cytoplasm. It localises to the nucleus. Functionally, acts as a co-chaperone for HSP90. Controls root development through the modulation of auxin distribution in the root meristem. This chain is Co-chaperone protein p23-1, found in Arabidopsis thaliana (Mouse-ear cress).